A 647-amino-acid chain; its full sequence is Homologous recombination OB-fold protein (647 aa).

Ser47 is subject to Phosphoserine. Disordered stretches follow at residues Ala284 to Gly361, Ser380 to Pro399, and Ser581 to Asp631. Asymmetric dimethylarginine occurs at positions 285, 295, 329, and 337. The span at Thr287 to Leu308 shows a compositional bias: polar residues. The span at Thr319–Ser332 shows a compositional bias: low complexity. Residues Ser380 to Ser390 are compositionally biased toward polar residues. Residues Ala618–Asp631 show a composition bias toward acidic residues.

Interacts with MCM8; this interaction is necessary for MCM8-MCM9 helicase complex recruitment to DNA damage sites. Interacts with RPA1; this interaction associates HROB with the RPA complex.

The protein localises to the nucleus. It is found in the chromosome. In terms of biological role, DNA-binding protein involved in homologous recombination that acts by recruiting the MCM8-MCM9 helicase complex to sites of DNA damage to promote DNA repair synthesis. This Homo sapiens (Human) protein is Homologous recombination OB-fold protein.